Consider the following 459-residue polypeptide: DnaJ protein homolog XDJ1 (459 aa).

Residues 7-79 (GDRLYDVLGV…KSHYDLYGDD (73 aa)) form the J domain. The CR-type zinc-finger motif lies at 146-240 (GKKLKFDLKR…CAGLGLLSKK (95 aa)). 4 CXXCXGXG motif repeats span residues 159 to 166 (CIKCHGSG), 181 to 188 (CESCAGKG), 208 to 215 (CEKCNGKG), and 228 to 235 (CPDCAGLG).

The protein resides in the mitochondrion outer membrane. This is DnaJ protein homolog XDJ1 (XDJ1) from Saccharomyces cerevisiae (strain ATCC 204508 / S288c) (Baker's yeast).